We begin with the raw amino-acid sequence, 283 residues long: Polyamine aminopropyltransferase (283 aa).

The PABS domain maps to 2-238 (ELWYTEEWTE…GHWLFGFASK (237 aa)). Q31 is an S-methyl-5'-thioadenosine binding site. The spermidine site is built by H62 and D86. S-methyl-5'-thioadenosine is bound by residues E106 and 137–138 (DG). The Proton acceptor role is filled by D156. 156-159 (DSTD) is a binding site for spermidine. P163 provides a ligand contact to S-methyl-5'-thioadenosine.

It belongs to the spermidine/spermine synthase family. Homodimer or homotetramer.

It localises to the cytoplasm. The catalysed reaction is S-adenosyl 3-(methylsulfanyl)propylamine + putrescine = S-methyl-5'-thioadenosine + spermidine + H(+). It participates in amine and polyamine biosynthesis; spermidine biosynthesis; spermidine from putrescine: step 1/1. In terms of biological role, catalyzes the irreversible transfer of a propylamine group from the amino donor S-adenosylmethioninamine (decarboxy-AdoMet) to putrescine (1,4-diaminobutane) to yield spermidine. In Clostridioides difficile (strain 630) (Peptoclostridium difficile), this protein is Polyamine aminopropyltransferase.